A 138-amino-acid chain; its full sequence is Basic phospholipase A2 DsM-b1/DsM-b1' (138 aa).

The first 16 residues, 1–16 (MRTLWIVAMCLIGVEG), serve as a signal peptide directing secretion. Cystine bridges form between cysteine 42-cysteine 131, cysteine 44-cysteine 60, cysteine 59-cysteine 111, cysteine 65-cysteine 138, cysteine 66-cysteine 104, cysteine 73-cysteine 97, and cysteine 91-cysteine 102. Positions 43, 45, and 47 each coordinate Ca(2+). Histidine 63 is an active-site residue. Aspartate 64 provides a ligand contact to Ca(2+). Aspartate 105 is a catalytic residue.

The cofactor is Ca(2+). Expressed by the venom gland.

The protein localises to the secreted. It catalyses the reaction a 1,2-diacyl-sn-glycero-3-phosphocholine + H2O = a 1-acyl-sn-glycero-3-phosphocholine + a fatty acid + H(+). In terms of biological role, exhibits high hydrolytic activities and shows strong preference for the anionic micelles (dPPC with deoxycholate) to the zwitterionic micelles (dPPC with Triton X-100). PLA2 catalyzes the calcium-dependent hydrolysis of the 2-acyl groups in 3-sn-phosphoglycerides. This is Basic phospholipase A2 DsM-b1/DsM-b1' from Daboia siamensis (Eastern Russel's viper).